The sequence spans 805 residues: Transcription factor E2f1 (805 aa).

Disordered stretches follow at residues 9–45 (APIN…TTGH), 119–208 (AAAA…LRHD), and 224–255 (PASH…RNRA). Composition is skewed to low complexity over residues 12-37 (NNSN…QQHY) and 119-134 (AAAA…QLQQ). Composition is skewed to polar residues over residues 144–154 (RKATGKSNDIT) and 181–195 (HHQT…SSAP). The PIP-box K+4 motif signature appears at 147-161 (TGKSNDITNYYKVKR). Over residues 240–249 (AASVASSSSS) the composition is skewed to low complexity. Residues 253–318 (NRADTSLGIL…KKSKNNIQWR (66 aa)) mediate DNA binding. The tract at residues 318–411 (RCGQSMVSQE…LPNTKLPREI (94 aa)) is dimerization. The residue at position 434 (Ser434) is a Phosphoserine. Disordered stretches follow at residues 578-650 (SLTE…QRRS) and 714-743 (GAGA…DANS). Composition is skewed to low complexity over residues 595–615 (AAAA…NSHN) and 623–636 (SNHS…NSKS). A compositionally biased stretch (polar residues) spans 637–647 (QPPTIGYGSSQ).

It belongs to the E2F/DP family. As to quaternary structure, heterodimer of E2f and Dp. Cooperates to give sequence-specific DNA binding and optimal trans-activation. Interacts with PCNA. Post-translationally, ubiquitinated by the DCX(DTL) complex, also named CRL4(CDT2) complex, leading to its degradation during S phase. Ubiquitination by the DCX(DTL) complex is essential for cell cycle control and is PCNA-dependent: interacts with PCNA via its PIP-box, while the presence of the containing the 'K+4' motif in the PIP box, recruit the DCX(DTL) complex, leading to its degradation. As to expression, segmentally repeated expression throughout early embryos is restricted to the ventral nerve cord in later embryos.

It is found in the nucleus. In terms of biological role, transcriptional activator that binds to E2f sites. Required for wild-type growth in mitotic and polytene tissues, Contributes to the expression of replication genes at the G1-S transition and Cyclin E. Activates cell proliferation in wing imaginal disk, which requires expression of vg. The protein is Transcription factor E2f1 of Drosophila melanogaster (Fruit fly).